Consider the following 521-residue polypeptide: MSEQNNAVLPKGVTQGEFNKAVQKFRALLGDDNVLVESDQLVPYNKIMMPVENAAHAPSAAVTATTVEQVQGVVKICNEHKIPIWTISTGRNFGYGSAAPVQRGQVILDLKKMNKIIKIDPEMCYALVEPGVTFGQMYDYIQENNLPVMLSFSAPSAIAGPVGNTMDRGVGYTPYGEHFMMQCGMEVVLANGDVYRTGMGGVPGSNTWQIFKWGYGPTLDGMFTQANYGICTKMGFWLMPKPPVFKPFEVIFEDEADIVEIVDALRPLRMSNTIPNSVVIASTLWEAGSAHLTRAQYTTEPGHTPDSVIKQMQKDTGMGAWNLYAALYGTQEQVDVNWKIVTDVFKKLGKGRIVTQEEAGDTQPFKYRAQLMSGVPNLQEFGLYNWRGGGGSMWFAPVSEARGSECKKQAAMAKRVLHKYGLDYVAEFIVAPRDMHHVIDVLYDRTNPEETKRADACFNELLDEFEKEGYAVYRVNTRFQDRVAQSYGPVKRKLEHAIKRAVDPNNILAPGRSGIDLNNDF.

The FAD-binding PCMH-type domain occupies 54-268 (AAHAPSAAVT…VEIVDALRPL (215 aa)). At tyrosine 384 the chain carries O-8alpha-FAD tyrosine.

As to quaternary structure, tetramer of two cytochrome subunits and two flavoprotein subunits. The cofactor is FAD.

The enzyme catalyses 4-methylphenol + 4 oxidized [azurin] + H2O = 4 reduced [azurin] + 4-hydroxybenzaldehyde + 4 H(+). It functions in the pathway aromatic compound metabolism; p-cresol degradation. Functionally, catalyzes the azurin dependent hydroxylation of the methyl group of 4-methylphenol to form 4-hydroxybenzaldehyde. This Pseudomonas putida (Arthrobacter siderocapsulatus) protein is 4-cresol dehydrogenase [hydroxylating] flavoprotein subunit (pchF).